The primary structure comprises 239 residues: 7-cyano-7-deazaguanine synthase (239 aa).

An ATP-binding site is contributed by 8 to 18; that stretch reads LSGGLDSPTVL. C188, C196, C199, and C202 together coordinate Zn(2+).

Belongs to the QueC family. The cofactor is Zn(2+).

It catalyses the reaction 7-carboxy-7-deazaguanine + NH4(+) + ATP = 7-cyano-7-deazaguanine + ADP + phosphate + H2O + H(+). Its pathway is purine metabolism; 7-cyano-7-deazaguanine biosynthesis. Functionally, catalyzes the ATP-dependent conversion of 7-carboxy-7-deazaguanine (CDG) to 7-cyano-7-deazaguanine (preQ(0)). The polypeptide is 7-cyano-7-deazaguanine synthase (Picrophilus torridus (strain ATCC 700027 / DSM 9790 / JCM 10055 / NBRC 100828 / KAW 2/3)).